A 443-amino-acid chain; its full sequence is uncharacterized protein (443 aa).

Residues 1 to 21 are disordered; that stretch reads MQSVTPPPTQQGKPDPTNSDM. Over residues 10 to 20 the composition is skewed to polar residues; it reads QQGKPDPTNSD.

This is an uncharacterized protein from Caenorhabditis elegans.